A 438-amino-acid polypeptide reads, in one-letter code: Exosome complex component RRP45 (438 aa).

Ser-65 carries the post-translational modification Phosphoserine. The residue at position 297 (Lys-297) is an N6-acetyllysine; alternate. Lys-297 is covalently cross-linked (Glycyl lysine isopeptide (Lys-Gly) (interchain with G-Cter in SUMO1); alternate). Residue Lys-297 forms a Glycyl lysine isopeptide (Lys-Gly) (interchain with G-Cter in SUMO2); alternate linkage. Residues Ser-306 and Ser-346 each carry the phosphoserine modification. Disordered regions lie at residues Ala-337–Asp-365 and Thr-377–Asn-438. Positions Asp-349–Ile-364 are enriched in acidic residues. 2 positions are modified to phosphoserine: Ser-393 and Ser-395. Residues Gln-427–Asn-438 show a composition bias toward basic residues.

This sequence belongs to the RNase PH family. In terms of assembly, component of the RNA exosome core complex (Exo-9), composed of EXOSC1, EXOSC2, EXOSC3, EXOSC4, EXOSC5, EXOSC6, EXOSC7, EXOSC8 and EXOSC9; within the complex interacts with EXOSC3, EXOSC4, EXOSC5 and DIS3. The catalytically inactive RNA exosome core complex (Exo-9) associates with the catalytic subunit EXOSC10/RRP6. Exo-9 may associate with DIS3 to form the nucleolar exosome complex, or DIS3L to form the cytoplasmic exosome complex. Exo-9 is formed by a hexameric base ring consisting of the heterodimers EXOSC4-EXOSC9, EXOSC5-EXOSC8 and EXOSC6-EXOSC7, and a cap ring consisting of EXOSC1, EXOSC2 and EXOSC3. The RNA exosome complex associates with cofactors C1D/RRP47, MPHOSPH6/MPP6 and MTREX/MTR4. Interacts (via C-terminus region) with SETX (via N-terminus domain); the interaction enhances SETX sumoylation. Interacts with DIS3; the interaction is direct.

The protein resides in the cytoplasm. Its subcellular location is the nucleus. It is found in the nucleolus. It localises to the nucleoplasm. Functionally, non-catalytic component of the RNA exosome complex which has 3'-&gt;5' exoribonuclease activity and participates in a multitude of cellular RNA processing and degradation events. In the nucleus, the RNA exosome complex is involved in proper maturation of stable RNA species such as rRNA, snRNA and snoRNA, in the elimination of RNA processing by-products and non-coding 'pervasive' transcripts, such as antisense RNA species and promoter-upstream transcripts (PROMPTs), and of mRNAs with processing defects, thereby limiting or excluding their export to the cytoplasm. The RNA exosome may be involved in Ig class switch recombination (CSR) and/or Ig variable region somatic hypermutation (SHM) by targeting AICDA deamination activity to transcribed dsDNA substrates. In the cytoplasm, the RNA exosome complex is involved in general mRNA turnover and specifically degrades inherently unstable mRNAs containing AU-rich elements (AREs) within their 3' untranslated regions, and in RNA surveillance pathways, preventing translation of aberrant mRNAs. It seems to be involved in degradation of histone mRNA. The catalytic inactive RNA exosome core complex of 9 subunits (Exo-9) is proposed to play a pivotal role in the binding and presentation of RNA for ribonucleolysis, and to serve as a scaffold for the association with catalytic subunits and accessory proteins or complexes. EXOSC9 binds to ARE-containing RNAs. This Mus musculus (Mouse) protein is Exosome complex component RRP45 (Exosc9).